A 355-amino-acid chain; its full sequence is UDP-N-acetylglucosamine--N-acetylmuramyl-(pentapeptide) pyrophosphoryl-undecaprenol N-acetylglucosamine transferase (355 aa).

Residues 15–17 (TGG), Asn127, Arg163, Ser191, Ile244, 263–268 (ALTVSE), and Gln288 contribute to the UDP-N-acetyl-alpha-D-glucosamine site.

Belongs to the glycosyltransferase 28 family. MurG subfamily.

It localises to the cell inner membrane. It catalyses the reaction di-trans,octa-cis-undecaprenyl diphospho-N-acetyl-alpha-D-muramoyl-L-alanyl-D-glutamyl-meso-2,6-diaminopimeloyl-D-alanyl-D-alanine + UDP-N-acetyl-alpha-D-glucosamine = di-trans,octa-cis-undecaprenyl diphospho-[N-acetyl-alpha-D-glucosaminyl-(1-&gt;4)]-N-acetyl-alpha-D-muramoyl-L-alanyl-D-glutamyl-meso-2,6-diaminopimeloyl-D-alanyl-D-alanine + UDP + H(+). It functions in the pathway cell wall biogenesis; peptidoglycan biosynthesis. Cell wall formation. Catalyzes the transfer of a GlcNAc subunit on undecaprenyl-pyrophosphoryl-MurNAc-pentapeptide (lipid intermediate I) to form undecaprenyl-pyrophosphoryl-MurNAc-(pentapeptide)GlcNAc (lipid intermediate II). The protein is UDP-N-acetylglucosamine--N-acetylmuramyl-(pentapeptide) pyrophosphoryl-undecaprenol N-acetylglucosamine transferase of Escherichia coli O139:H28 (strain E24377A / ETEC).